The sequence spans 278 residues: Thiazole synthase (278 aa).

The Schiff-base intermediate with DXP role is filled by lysine 107. Residues glycine 168, 194-195 (AG), and 216-217 (AS) contribute to the 1-deoxy-D-xylulose 5-phosphate site.

Belongs to the ThiG family. In terms of assembly, homotetramer. Forms heterodimers with either ThiH or ThiS.

It localises to the cytoplasm. The catalysed reaction is [ThiS sulfur-carrier protein]-C-terminal-Gly-aminoethanethioate + 2-iminoacetate + 1-deoxy-D-xylulose 5-phosphate = [ThiS sulfur-carrier protein]-C-terminal Gly-Gly + 2-[(2R,5Z)-2-carboxy-4-methylthiazol-5(2H)-ylidene]ethyl phosphate + 2 H2O + H(+). Its pathway is cofactor biosynthesis; thiamine diphosphate biosynthesis. In terms of biological role, catalyzes the rearrangement of 1-deoxy-D-xylulose 5-phosphate (DXP) to produce the thiazole phosphate moiety of thiamine. Sulfur is provided by the thiocarboxylate moiety of the carrier protein ThiS. In vitro, sulfur can be provided by H(2)S. The polypeptide is Thiazole synthase (Corynebacterium urealyticum (strain ATCC 43042 / DSM 7109)).